The primary structure comprises 198 residues: MAHYAKRVEIRAIIEELVLAKAQPTDDASESGYDRNMYLNTLFGYIALVGTSKKAIHYGEVDIVGPKASKKTGIDPRGKMVVSELVGRMRTLSVAVSEGPVKGATLRQMCEPFAQNAYDFLVVMAEMGTYSQLATKMTRSGFKEPQVMFDFASGLDLKALTLQEATVIQAMHSRLFRTEGAKGVFNAQSSIGEQAVEI.

The protein resides in the virion. In Vitis vinifera (Grape), this protein is Capsid protein.